Reading from the N-terminus, the 284-residue chain is tRNA-splicing endonuclease (284 aa).

Catalysis depends on residues Y222, H229, and K257.

It belongs to the tRNA-intron endonuclease family. Archaeal long subfamily. In terms of assembly, homodimer.

The enzyme catalyses pretRNA = a 3'-half-tRNA molecule with a 5'-OH end + a 5'-half-tRNA molecule with a 2',3'-cyclic phosphate end + an intron with a 2',3'-cyclic phosphate and a 5'-hydroxyl terminus.. Its function is as follows. Endonuclease that removes tRNA introns. Cleaves pre-tRNA at the 5'- and 3'-splice sites to release the intron. The products are an intron and two tRNA half-molecules bearing 2',3' cyclic phosphate and 5'-OH termini. Recognizes a pseudosymmetric substrate in which 2 bulged loops of 3 bases are separated by a stem of 4 bp. This chain is tRNA-splicing endonuclease, found in Picrophilus torridus (strain ATCC 700027 / DSM 9790 / JCM 10055 / NBRC 100828 / KAW 2/3).